We begin with the raw amino-acid sequence, 493 residues long: Cysteine sulfinic acid decarboxylase (493 aa).

Lysine 305 is subject to N6-(pyridoxal phosphate)lysine.

The protein belongs to the group II decarboxylase family. Homodimer. Pyridoxal 5'-phosphate is required as a cofactor. Expressed in brain, liver and kidney.

It carries out the reaction L-aspartate + H(+) = beta-alanine + CO2. The enzyme catalyses 3-sulfino-L-alanine + H(+) = hypotaurine + CO2. The catalysed reaction is L-cysteate + H(+) = taurine + CO2. The protein operates within organosulfur biosynthesis; taurine biosynthesis; hypotaurine from L-cysteine: step 2/2. Its function is as follows. Catalyzes the decarboxylation of L-aspartate, 3-sulfino-L-alanine (cysteine sulfinic acid), and L-cysteate to beta-alanine, hypotaurine and taurine, respectively. The preferred substrate is 3-sulfino-L-alanine. Does not exhibit any decarboxylation activity toward glutamate. This Rattus norvegicus (Rat) protein is Cysteine sulfinic acid decarboxylase (Csad).